Reading from the N-terminus, the 189-residue chain is UPF0301 protein RAF_ORF0041 (189 aa).

It belongs to the UPF0301 (AlgH) family.

This is UPF0301 protein RAF_ORF0041 from Rickettsia africae (strain ESF-5).